The chain runs to 478 residues: Centromere DNA-binding protein complex CBF3 subunit C (478 aa).

Residues 206 to 251 form a disordered region; it reads EVGEEKDVDVSGANSDENSSPSSTIKNKKRSASKRSHSDNGNVGAT. Polar residues predominate over residues 217–230; the sequence is GANSDENSSPSSTI. Over residues 231 to 240 the composition is skewed to basic residues; that stretch reads KNKKRSASKR.

As to quaternary structure, component of the CBF3 copmplex, which is formed of CBF3A/CBF2, CBF3B/CEP3, CBF3C/CTF13 and CBF3D. CBF3C interacts with CBF3D and SGT1.

It localises to the nucleus. It is found in the chromosome. Its subcellular location is the centromere. Its function is as follows. Acts as a central component of the centromere DNA-binding protein complex CBF3, which is essential for chromosome segregation and movement of centromeres along microtubules. CBF3 is required for the recruitment of other kinetochore complexes to CEN DNA. It plays a role in the attachment of chromosomes to the spindle and binds selectively to a highly conserved DNA sequence called CDEIII, found in centromers and in several promoters. The association of CBF3C with CBF3D and SGT1 is required for CBF3C activation and CBF3 assembly. The protein is Centromere DNA-binding protein complex CBF3 subunit C (CTF13) of Saccharomyces cerevisiae (strain ATCC 204508 / S288c) (Baker's yeast).